Consider the following 88-residue polypeptide: Cell division topological specificity factor (88 aa).

The protein belongs to the MinE family.

Functionally, prevents the cell division inhibition by proteins MinC and MinD at internal division sites while permitting inhibition at polar sites. This ensures cell division at the proper site by restricting the formation of a division septum at the midpoint of the long axis of the cell. The polypeptide is Cell division topological specificity factor (Clostridium kluyveri (strain ATCC 8527 / DSM 555 / NBRC 12016 / NCIMB 10680 / K1)).